Consider the following 135-residue polypeptide: UPF0299 membrane protein YPK_2559 (135 aa).

The next 3 membrane-spanning stretches (helical) occupy residues 30–50 (LLLPIVIPGSIIGMLILFVLL), 66–86 (LLIRYMALLFVPIGVGVMQYY), and 93–113 (FGPIVVSCFISTLIVMLVVAY).

The protein belongs to the UPF0299 family.

The protein resides in the cell inner membrane. The chain is UPF0299 membrane protein YPK_2559 from Yersinia pseudotuberculosis serotype O:3 (strain YPIII).